We begin with the raw amino-acid sequence, 220 residues long: MAAGTTTKERLERLINAKKQLEAQINRNGQILAANDNVGMSGPLVDAEGFPRNDIDVYQVRLARQTIICLQNDHKELMNQIQTLLNQYHSEIATTDPELVNRASALDLDSDRSPGGANITDLAPARAIVVVNLVSPDSPAERAGLCAGDAILRFGSINSGNFKGDLAQIGELVRNMQSQNVQLKVKRGEQQLDLILVPKTWSGRGLLGCNIVLPPEAMDH.

Coiled-coil stretches lie at residues 4-32 (GTTTKERLERLINAKKQLEAQINRNGQIL) and 61-91 (RLARQTIICLQNDHKELMNQIQTLLNQYHSE). The 99-residue stretch at 102 to 200 (RASALDLDSD…QLDLILVPKT (99 aa)) folds into the PDZ domain.

This sequence belongs to the proteasome subunit p27 family. In terms of assembly, interacts with PI31; this interaction is increased by PI31 ADP-ribosylation. Interacts with Rpt5.

In terms of biological role, acts as a chaperone during the assembly of the 26S proteasome, specifically of the base subcomplex of the PA700/19S regulatory complex (RC). The sequence is that of 26S proteasome non-ATPase regulatory subunit 9 from Drosophila melanogaster (Fruit fly).